The sequence spans 545 residues: CTP synthase (545 aa).

The segment at 1-266 (MTTRYIFVTG…DDLVVKRFGL (266 aa)) is amidoligase domain. S14 contributes to the CTP binding site. S14 contributes to the UTP binding site. Residues 15–20 (SLGKGI) and D72 each bind ATP. Mg(2+)-binding residues include D72 and E140. CTP-binding positions include 147 to 149 (DIE), 187 to 192 (KTKPTQ), and K223. Residues 187 to 192 (KTKPTQ) and K223 each bind UTP. 239–241 (KDV) provides a ligand contact to ATP. One can recognise a Glutamine amidotransferase type-1 domain in the interval 291–542 (VIGMVGKYIE…IAAASAHQKR (252 aa)). Position 352 (G352) interacts with L-glutamine. The Nucleophile; for glutamine hydrolysis role is filled by C379. L-glutamine-binding positions include 380–383 (LGMQ), E403, and R470. Active-site residues include H515 and E517.

The protein belongs to the CTP synthase family. In terms of assembly, homotetramer.

It carries out the reaction UTP + L-glutamine + ATP + H2O = CTP + L-glutamate + ADP + phosphate + 2 H(+). It catalyses the reaction L-glutamine + H2O = L-glutamate + NH4(+). The catalysed reaction is UTP + NH4(+) + ATP = CTP + ADP + phosphate + 2 H(+). The protein operates within pyrimidine metabolism; CTP biosynthesis via de novo pathway; CTP from UDP: step 2/2. Its activity is regulated as follows. Allosterically activated by GTP, when glutamine is the substrate; GTP has no effect on the reaction when ammonia is the substrate. The allosteric effector GTP functions by stabilizing the protein conformation that binds the tetrahedral intermediate(s) formed during glutamine hydrolysis. Inhibited by the product CTP, via allosteric rather than competitive inhibition. Functionally, catalyzes the ATP-dependent amination of UTP to CTP with either L-glutamine or ammonia as the source of nitrogen. Regulates intracellular CTP levels through interactions with the four ribonucleotide triphosphates. The sequence is that of CTP synthase from Shewanella putrefaciens (strain CN-32 / ATCC BAA-453).